The sequence spans 122 residues: Small ribosomal subunit protein uS13 (122 aa).

Residues 98 to 122 (VRGQKTKSNARTRKGPRPSRIKKKK) are disordered. Positions 101-122 (QKTKSNARTRKGPRPSRIKKKK) are enriched in basic residues.

It belongs to the universal ribosomal protein uS13 family. In terms of assembly, part of the 30S ribosomal subunit. Forms a loose heterodimer with protein S19. Forms two bridges to the 50S subunit in the 70S ribosome.

In terms of biological role, located at the top of the head of the 30S subunit, it contacts several helices of the 16S rRNA. In the 70S ribosome it contacts the 23S rRNA (bridge B1a) and protein L5 of the 50S subunit (bridge B1b), connecting the 2 subunits; these bridges are implicated in subunit movement. Contacts the tRNAs in the A and P-sites. The protein is Small ribosomal subunit protein uS13 of Thermosipho africanus (strain TCF52B).